Here is a 158-residue protein sequence, read N- to C-terminus: Transcription elongation factor GreA (158 aa).

This sequence belongs to the GreA/GreB family.

Functionally, necessary for efficient RNA polymerase transcription elongation past template-encoded arresting sites. The arresting sites in DNA have the property of trapping a certain fraction of elongating RNA polymerases that pass through, resulting in locked ternary complexes. Cleavage of the nascent transcript by cleavage factors such as GreA or GreB allows the resumption of elongation from the new 3'terminus. GreA releases sequences of 2 to 3 nucleotides. This Yersinia pestis protein is Transcription elongation factor GreA.